Reading from the N-terminus, the 781-residue chain is Beta-mannosyltransferase 4 (781 aa).

Over 1–17 (MTKSYMPLFRSPRQFKK) the chain is Cytoplasmic. Residues 18–38 (IYFILIPLILAVIILHVFFDG) form a helical membrane-spanning segment. At 39 to 781 (FNKISEYSPT…EKEDDDDIEV (743 aa)) the chain is on the extracellular side. Residues 640 to 733 (KLGDSEAAIK…AKDEDKNEDE (94 aa)) adopt a coiled-coil conformation. Composition is skewed to basic and acidic residues over residues 663–728 (KAEK…KDED) and 736–750 (KEKNDESGLTEKSEV). A disordered region spans residues 663-781 (KAEKEKAEKE…EKEDDDDIEV (119 aa)). Acidic residues predominate over residues 751–781 (EENGENTNEGGEDDGDGDGEEEKEDDDDIEV).

Belongs to the BMT family.

Its subcellular location is the membrane. Functionally, beta-mannosyltransferase involved in cell wall biosynthesis. Required for the elongation of beta-mannose chains on the acid-labile fraction of cell wall phosphopeptidomannan. This Candida albicans (strain SC5314 / ATCC MYA-2876) (Yeast) protein is Beta-mannosyltransferase 4 (BMT4).